Here is a 141-residue protein sequence, read N- to C-terminus: Putative antiporter subunit mnhB2 (141 aa).

The next 4 helical transmembrane spans lie at 10-30, 35-55, 70-90, and 114-134; these read TVTK…FFAG, GGGF…FLAF, ILMI…TFFG, and ITLF…TVML.

The protein belongs to the CPA3 antiporters (TC 2.A.63) subunit B family. As to quaternary structure, may form a heterooligomeric complex that consists of seven subunits: mnhA2, mnhB2, mnhC2, mnhD2, mnhE2, mnhF2 and mnhG2.

It localises to the cell membrane. The chain is Putative antiporter subunit mnhB2 (mnhB2) from Staphylococcus aureus (strain MRSA252).